Reading from the N-terminus, the 150-residue chain is Regulatory protein RecX (150 aa).

This sequence belongs to the RecX family.

It localises to the cytoplasm. Its function is as follows. Modulates RecA activity. This chain is Regulatory protein RecX, found in Ectopseudomonas mendocina (strain ymp) (Pseudomonas mendocina).